The sequence spans 236 residues: Aspartate/glutamate leucyltransferase (236 aa).

Belongs to the R-transferase family. Bpt subfamily.

Its subcellular location is the cytoplasm. The catalysed reaction is N-terminal L-glutamyl-[protein] + L-leucyl-tRNA(Leu) = N-terminal L-leucyl-L-glutamyl-[protein] + tRNA(Leu) + H(+). The enzyme catalyses N-terminal L-aspartyl-[protein] + L-leucyl-tRNA(Leu) = N-terminal L-leucyl-L-aspartyl-[protein] + tRNA(Leu) + H(+). In terms of biological role, functions in the N-end rule pathway of protein degradation where it conjugates Leu from its aminoacyl-tRNA to the N-termini of proteins containing an N-terminal aspartate or glutamate. The protein is Aspartate/glutamate leucyltransferase of Saccharophagus degradans (strain 2-40 / ATCC 43961 / DSM 17024).